We begin with the raw amino-acid sequence, 183 residues long: Photosystem I assembly protein Ycf4 (183 aa).

The next 2 membrane-spanning stretches (helical) occupy residues 23-43 (WASV…SSYF) and 64-84 (VMSF…LTII).

Belongs to the Ycf4 family.

The protein localises to the plastid. Its subcellular location is the chloroplast thylakoid membrane. In terms of biological role, seems to be required for the assembly of the photosystem I complex. The chain is Photosystem I assembly protein Ycf4 from Stigeoclonium helveticum (Green alga).